An 864-amino-acid chain; its full sequence is Nitrate reductase [NADH] (864 aa).

Residue C139 participates in Mo-molybdopterin binding. The 76-residue stretch at 497 to 572 (PRQYTMEEVA…LAQYYIGDLV (76 aa)) folds into the Cytochrome b5 heme-binding domain. H532 and H555 together coordinate heme. In terms of domain architecture, FAD-binding FR-type spans 606–718 (RQKVKLPLIE…KGPLGHFVYD (113 aa)). Residues 658–661 (RAYT), 675–679 (LIKVY), F680, F687, 692–694 (KMS), and T746 each bind FAD.

It belongs to the nitrate reductase family. Homodimer. Requires FAD as cofactor. It depends on heme as a cofactor. The cofactor is Mo-molybdopterin.

The enzyme catalyses nitrite + NAD(+) + H2O = nitrate + NADH + H(+). Its function is as follows. Nitrate reductase is a key enzyme involved in the first step of nitrate assimilation in plants, fungi and bacteria. The polypeptide is Nitrate reductase [NADH] (NITA) (Volvox carteri (Green alga)).